Consider the following 1103-residue polypeptide: Isoleucine--tRNA ligase (1103 aa).

A 'HIGH' region motif is present at residues 53 to 63 (PFANGLPHYGH). The 'KMSKS' region signature appears at 628-632 (KLSKR). An ATP-binding site is contributed by Lys-631.

Belongs to the class-I aminoacyl-tRNA synthetase family. IleS type 2 subfamily. Monomer. Zn(2+) serves as cofactor.

It is found in the cytoplasm. It carries out the reaction tRNA(Ile) + L-isoleucine + ATP = L-isoleucyl-tRNA(Ile) + AMP + diphosphate. In terms of biological role, catalyzes the attachment of isoleucine to tRNA(Ile). As IleRS can inadvertently accommodate and process structurally similar amino acids such as valine, to avoid such errors it has two additional distinct tRNA(Ile)-dependent editing activities. One activity is designated as 'pretransfer' editing and involves the hydrolysis of activated Val-AMP. The other activity is designated 'posttransfer' editing and involves deacylation of mischarged Val-tRNA(Ile). This is Isoleucine--tRNA ligase from Rickettsia akari (strain Hartford).